The following is a 108-amino-acid chain: Competence protein ComGC (108 aa).

An N-terminal signal peptide occupies residues 1–13 (MKKMMTFLKKAKV). Residues 14–39 (KAFTLVEMLVVLLIISVLFLLFVPNL) form a may be involved in polymerization of ComGC region. N-methylphenylalanine is present on phenylalanine 16. Residues 16 to 36 (FTLVEMLVVLLIISVLFLLFV) traverse the membrane as a helical segment.

It belongs to the ComGC family. The transformation pili are flexible filaments, consisting mainly of the major pilin ComGC and smaller amounts of the minor pilins, including at least ComGD, ComGF and ComGG, and perhaps ComGE. Homodimer. Forms higher-order multimers. Interacts with ComGG; the interaction is probably direct. Undergoes proteolytic cleavage.

It is found in the cell membrane. The protein resides in the cell surface. Its subcellular location is the fimbrium. The protein localises to the secreted. Its function is as follows. Major component of the type IV-like pilus (T4P) that plays a role in transformation. Transformation pili are dynamically extended and retracted, perhaps thereby promoting DNA uptake and transformation. Required for transformation. Required for DNA binding. This chain is Competence protein ComGC, found in Streptococcus pneumoniae serotype 4 (strain ATCC BAA-334 / TIGR4).